Consider the following 331-residue polypeptide: Biotin synthase (331 aa).

In terms of domain architecture, Radical SAM core spans 43 to 267; it reads NTVQVSTLLS…LMPASYVRLS (225 aa). Positions 58, 62, and 65 each coordinate [4Fe-4S] cluster. Residues Cys102, Cys133, Cys193, and Arg265 each coordinate [2Fe-2S] cluster.

The protein belongs to the radical SAM superfamily. Biotin synthase family. As to quaternary structure, homodimer. [4Fe-4S] cluster is required as a cofactor. The cofactor is [2Fe-2S] cluster.

It carries out the reaction (4R,5S)-dethiobiotin + (sulfur carrier)-SH + 2 reduced [2Fe-2S]-[ferredoxin] + 2 S-adenosyl-L-methionine = (sulfur carrier)-H + biotin + 2 5'-deoxyadenosine + 2 L-methionine + 2 oxidized [2Fe-2S]-[ferredoxin]. Its pathway is cofactor biosynthesis; biotin biosynthesis; biotin from 7,8-diaminononanoate: step 2/2. Functionally, catalyzes the conversion of dethiobiotin (DTB) to biotin by the insertion of a sulfur atom into dethiobiotin via a radical-based mechanism. The protein is Biotin synthase of Alkalilimnicola ehrlichii (strain ATCC BAA-1101 / DSM 17681 / MLHE-1).